Reading from the N-terminus, the 303-residue chain is MKKIKCALIGPGNIGTDLLAKLQRSPVLEPVWMVGIDPASDGLKRASEMGIKTTAEGVDGLIPHMKADGVQIVFDATSAYVHAENSAKVNAQGAMMIDLTPAAIGPYCVPPVNLKQHVGRREMNVNMVTCGGQATIPMVYAVSRVQPVAYGEIVATVSSRSVGPGTRKNIDEFTRTTAGAVEKVGGARQGKAIIIINPAEPPLIMRDTVHCLVEGKPDEAAITQSIHDMIREVQKYVPGYKLVNGPVFDGQRVSVFMEVEGLGDYLPKYAGNLDIMTAAAARTAEMFAEEILKGELVLEPVAA.

Cys130 serves as the catalytic Acyl-thioester intermediate. Residues 161–169 and Asn272 contribute to the NAD(+) site; that span reads SVGPGTRKN.

Belongs to the acetaldehyde dehydrogenase family.

It carries out the reaction acetaldehyde + NAD(+) + CoA = acetyl-CoA + NADH + H(+). This chain is Acetaldehyde dehydrogenase, found in Verminephrobacter eiseniae (strain EF01-2).